The primary structure comprises 263 residues: uncharacterized protein (263 aa).

Belongs to the AtsA family.

The protein localises to the plastid. It localises to the chloroplast. This is an uncharacterized protein from Pyropia yezoensis (Susabi-nori).